A 256-amino-acid polypeptide reads, in one-letter code: Pimeloyl-[acyl-carrier protein] methyl ester esterase (256 aa).

The 228-residue stretch at 15 to 242 folds into the AB hydrolase-1 domain; that stretch reads HLVLLHGWGL…AAHAPFISHP (228 aa). Residues W22, 82 to 83, and 143 to 147 each bind substrate; these read SL and FLALQ. S82 functions as the Nucleophile in the catalytic mechanism. Catalysis depends on residues D207 and H235. Position 235 (H235) interacts with substrate.

Belongs to the AB hydrolase superfamily. Carboxylesterase BioH family. Monomer.

The protein resides in the cytoplasm. It carries out the reaction 6-carboxyhexanoyl-[ACP] methyl ester + H2O = 6-carboxyhexanoyl-[ACP] + methanol + H(+). It participates in cofactor biosynthesis; biotin biosynthesis. In terms of biological role, the physiological role of BioH is to remove the methyl group introduced by BioC when the pimeloyl moiety is complete. It allows to synthesize pimeloyl-ACP via the fatty acid synthetic pathway through the hydrolysis of the ester bonds of pimeloyl-ACP esters. This Salmonella newport (strain SL254) protein is Pimeloyl-[acyl-carrier protein] methyl ester esterase.